The primary structure comprises 217 residues: Deoxyribose-phosphate aldolase (217 aa).

Asp-90 serves as the catalytic Proton donor/acceptor. Catalysis depends on Lys-152, which acts as the Schiff-base intermediate with acetaldehyde. Catalysis depends on Lys-181, which acts as the Proton donor/acceptor.

The protein belongs to the DeoC/FbaB aldolase family. DeoC type 1 subfamily.

It localises to the cytoplasm. It carries out the reaction 2-deoxy-D-ribose 5-phosphate = D-glyceraldehyde 3-phosphate + acetaldehyde. It participates in carbohydrate degradation; 2-deoxy-D-ribose 1-phosphate degradation; D-glyceraldehyde 3-phosphate and acetaldehyde from 2-deoxy-alpha-D-ribose 1-phosphate: step 2/2. Its function is as follows. Catalyzes a reversible aldol reaction between acetaldehyde and D-glyceraldehyde 3-phosphate to generate 2-deoxy-D-ribose 5-phosphate. The protein is Deoxyribose-phosphate aldolase of Metamycoplasma hominis (Mycoplasma hominis).